Consider the following 278-residue polypeptide: Tryptophan synthase alpha chain (278 aa).

Catalysis depends on proton acceptor residues Glu-50 and Asp-61.

It belongs to the TrpA family. As to quaternary structure, tetramer of two alpha and two beta chains.

It carries out the reaction (1S,2R)-1-C-(indol-3-yl)glycerol 3-phosphate + L-serine = D-glyceraldehyde 3-phosphate + L-tryptophan + H2O. Its pathway is amino-acid biosynthesis; L-tryptophan biosynthesis; L-tryptophan from chorismate: step 5/5. Its function is as follows. The alpha subunit is responsible for the aldol cleavage of indoleglycerol phosphate to indole and glyceraldehyde 3-phosphate. This Rhodopseudomonas palustris (strain BisB5) protein is Tryptophan synthase alpha chain.